A 508-amino-acid chain; its full sequence is Prenylcysteine oxidase 1 (508 aa).

The N-terminal stretch at 1 to 31 is a signal peptide; it reads MDPAAPGLACSILRLGLGLLLLCSWWYPGSA. Asparagine 199, asparagine 291, and asparagine 356 each carry an N-linked (GlcNAc...) asparagine glycan.

The protein belongs to the prenylcysteine oxidase family. FAD is required as a cofactor.

It localises to the lysosome. The enzyme catalyses an S-polyprenyl-L-cysteine + O2 + H2O = a polyprenal + L-cysteine + H2O2. It carries out the reaction S-(2E,6E)-farnesyl-L-cysteine + O2 + H2O = (2E,6E)-farnesal + L-cysteine + H2O2. It catalyses the reaction [(2E,6E,10E)-geranylgeranyl]-L-cysteine + O2 + H2O = (2E,6E,10E)-geranylgeranial + L-cysteine + H2O2. Its function is as follows. Prenylcysteine oxidase that cleaves the thioether bond of prenyl-L-cysteines, such as farnesylcysteine and geranylgeranylcysteine. Only active against free prenylcysteines and not prenylcysteine residues within prenylated proteins or peptides. Involved in the final step in the degradation of prenylated proteins, by degrading prenylcysteines after the protein has been degraded. The polypeptide is Prenylcysteine oxidase 1 (Bos taurus (Bovine)).